The chain runs to 217 residues: Pyridoxine/pyridoxamine 5'-phosphate oxidase (217 aa).

Residues 14–17 (RKSY) and K72 contribute to the substrate site. FMN-binding positions include 67–72 (RVVLIK), 82–83 (YT), R88, and K89. Positions 129, 133, and 137 each coordinate substrate. Residues 146-147 (QS) and W190 each bind FMN. A substrate-binding site is contributed by 196 to 198 (RLH). Position 200 (R200) interacts with FMN.

This sequence belongs to the pyridoxamine 5'-phosphate oxidase family. Homodimer. Requires FMN as cofactor.

The catalysed reaction is pyridoxamine 5'-phosphate + O2 + H2O = pyridoxal 5'-phosphate + H2O2 + NH4(+). It carries out the reaction pyridoxine 5'-phosphate + O2 = pyridoxal 5'-phosphate + H2O2. The protein operates within cofactor metabolism; pyridoxal 5'-phosphate salvage; pyridoxal 5'-phosphate from pyridoxamine 5'-phosphate: step 1/1. It functions in the pathway cofactor metabolism; pyridoxal 5'-phosphate salvage; pyridoxal 5'-phosphate from pyridoxine 5'-phosphate: step 1/1. In terms of biological role, catalyzes the oxidation of either pyridoxine 5'-phosphate (PNP) or pyridoxamine 5'-phosphate (PMP) into pyridoxal 5'-phosphate (PLP). This is Pyridoxine/pyridoxamine 5'-phosphate oxidase from Acidovorax sp. (strain JS42).